The sequence spans 444 residues: Homocysteine/cysteine synthase (444 aa).

A Phosphoserine modification is found at Ser-44. Lys-160 is covalently cross-linked (Glycyl lysine isopeptide (Lys-Gly) (interchain with G-Cter in ubiquitin)). At Lys-209 the chain carries N6-(pyridoxal phosphate)lysine.

Belongs to the trans-sulfuration enzymes family. In terms of assembly, homotetramer. Pyridoxal 5'-phosphate is required as a cofactor.

It localises to the cytoplasm. The enzyme catalyses O-acetyl-L-homoserine + methanethiol = L-methionine + acetate + H(+). It carries out the reaction O-acetyl-L-homoserine + hydrogen sulfide = L-homocysteine + acetate. The catalysed reaction is O-acetyl-L-serine + hydrogen sulfide = L-cysteine + acetate. The protein operates within amino-acid biosynthesis; L-methionine biosynthesis via de novo pathway; L-homocysteine from O-acetyl-L-homoserine. Functionally, catalyzes the conversion of O-acetyl-L-homoserine (OAH) into homocysteine in the methionine biosynthesis pathway. Required to efficiently reduce toxic levels of hydrogen sulfide generated when the sulfate assimilation pathway (SAP) is active. Also catalyzes the conversion of O-acetylserine (OAS) into cysteine, the last step in the cysteine biosynthesis pathway. However, it seems that in S.cerevisiae cysteine biosynthesis occurs exclusively through the cystathionine pathway and not via direct incorporation of sulfur into OAS. It therefore has no metabolic role in cysteine biosynthesis and may only have a regulatory role controlling OAS levels. The protein is Homocysteine/cysteine synthase of Saccharomyces cerevisiae (strain ATCC 204508 / S288c) (Baker's yeast).